The primary structure comprises 271 residues: Chymotrypsin BII (271 aa).

The first 15 residues, 1–15 (MIGKLSLLLVCVAVA), serve as a signal peptide directing secretion. Residues 16-45 (SGNPAAGKPWHWKSPKPLVDPRIHVNATPR) constitute a propeptide, activation peptide. Residues 46 to 268 (IVGGVEATPH…YLDWIEQKTG (223 aa)) enclose the Peptidase S1 domain. Cysteines 71 and 87 form a disulfide. Catalysis depends on charge relay system residues histidine 86 and aspartate 132. Cystine bridges form between cysteine 196–cysteine 209 and cysteine 219–cysteine 245. Residue serine 223 is the Charge relay system of the active site.

This sequence belongs to the peptidase S1 family.

Its subcellular location is the secreted. It is found in the extracellular space. It catalyses the reaction Preferential cleavage: Tyr-|-Xaa, Trp-|-Xaa, Phe-|-Xaa, Leu-|-Xaa.. Its function is as follows. Serine protease with chymotryptic and collagenolytic activities. In Penaeus vannamei (Whiteleg shrimp), this protein is Chymotrypsin BII.